Reading from the N-terminus, the 357-residue chain is MLVLGIETTCDETAAAVIERAPDGIGKILSNIVRSQVDEHAPFGGVVPEIAARAHVDLLDGIIDRAMREAGIGFAQLNGVAAAAGPGLIGGVIVGLTTAKAIALVHDTPLVAVNHLEAHALTPRLTDGIEFPYCLFLASGGHTQIVAVTGVGQYVRLGTTVDDAIGEAFDKVAKMLGLPYPGGPQVERAAAGGDAARFAFPRPMQGRPDANFSLSGLKTAVRNEASRIAEITPQDISDLCASFQAAVLEATADRLNVGLRLFREQFGAPRALVAAGGVAANQAIRGALHDVARQAKTQLIMPPPALCTDNGAMIAWAGAERLALGMTDTMEAQPRARWLLDANATAPAGYGKTRAGF.

2 residues coordinate Fe cation: histidine 115 and histidine 119. Substrate-binding positions include 137–141 (LASGG), aspartate 170, glycine 183, and asparagine 281. Residue aspartate 309 participates in Fe cation binding.

The protein belongs to the KAE1 / TsaD family. Fe(2+) is required as a cofactor.

It localises to the cytoplasm. It catalyses the reaction L-threonylcarbamoyladenylate + adenosine(37) in tRNA = N(6)-L-threonylcarbamoyladenosine(37) in tRNA + AMP + H(+). Functionally, required for the formation of a threonylcarbamoyl group on adenosine at position 37 (t(6)A37) in tRNAs that read codons beginning with adenine. Is involved in the transfer of the threonylcarbamoyl moiety of threonylcarbamoyl-AMP (TC-AMP) to the N6 group of A37, together with TsaE and TsaB. TsaD likely plays a direct catalytic role in this reaction. In Bradyrhizobium diazoefficiens (strain JCM 10833 / BCRC 13528 / IAM 13628 / NBRC 14792 / USDA 110), this protein is tRNA N6-adenosine threonylcarbamoyltransferase.